The chain runs to 143 residues: Lutropin subunit beta (143 aa).

Residues 1-22 form the signal peptide; it reads MEMLQGLLLLWLLLLNVGGVWT. 6 disulfides stabilise this stretch: Cys-31–Cys-79, Cys-45–Cys-94, Cys-48–Cys-132, Cys-56–Cys-110, Cys-60–Cys-112, and Cys-115–Cys-122. Asn-35 is a glycosylation site (N-linked (GlcNAc...) asparagine).

Belongs to the glycoprotein hormones subunit beta family. As to quaternary structure, heterodimer of a common alpha chain and a unique beta chain which confers biological specificity to thyrotropin, lutropin, follitropin and gonadotropin.

It is found in the secreted. Functionally, promotes spermatogenesis and ovulation by stimulating the testes and ovaries to synthesize steroids. The protein is Lutropin subunit beta (LHB) of Felis catus (Cat).